The primary structure comprises 466 residues: 3-isopropylmalate dehydratase large subunit (466 aa).

[4Fe-4S] cluster-binding residues include C347, C407, and C410.

This sequence belongs to the aconitase/IPM isomerase family. LeuC type 1 subfamily. In terms of assembly, heterodimer of LeuC and LeuD. It depends on [4Fe-4S] cluster as a cofactor.

It carries out the reaction (2R,3S)-3-isopropylmalate = (2S)-2-isopropylmalate. It participates in amino-acid biosynthesis; L-leucine biosynthesis; L-leucine from 3-methyl-2-oxobutanoate: step 2/4. Its function is as follows. Catalyzes the isomerization between 2-isopropylmalate and 3-isopropylmalate, via the formation of 2-isopropylmaleate. The sequence is that of 3-isopropylmalate dehydratase large subunit from Shigella dysenteriae serotype 1 (strain Sd197).